Reading from the N-terminus, the 146-residue chain is NADH-quinone oxidoreductase subunit A (146 aa).

A run of 3 helical transmembrane segments spans residues isoleucine 4–leucine 24, leucine 63–isoleucine 83, and isoleucine 91–isoleucine 111.

This sequence belongs to the complex I subunit 3 family. In terms of assembly, NDH-1 is composed of 13 different subunits. Subunits NuoA, H, J, K, L, M, N constitute the membrane sector of the complex.

It is found in the cell inner membrane. The enzyme catalyses a quinone + NADH + 5 H(+)(in) = a quinol + NAD(+) + 4 H(+)(out). Its function is as follows. NDH-1 shuttles electrons from NADH, via FMN and iron-sulfur (Fe-S) centers, to quinones in the respiratory chain. The immediate electron acceptor for the enzyme in this species is believed to be ubiquinone. Couples the redox reaction to proton translocation (for every two electrons transferred, four hydrogen ions are translocated across the cytoplasmic membrane), and thus conserves the redox energy in a proton gradient. In Blochmanniella pennsylvanica (strain BPEN), this protein is NADH-quinone oxidoreductase subunit A.